The chain runs to 363 residues: Peptide chain release factor 1 (363 aa).

Residue Gln237 is modified to N5-methylglutamine. Positions 284–297 are enriched in basic and acidic residues; the sequence is ERAKQQSERSEQRR. The disordered stretch occupies residues 284 to 306; that stretch reads ERAKQQSERSEQRRLAVGSGDRS.

It belongs to the prokaryotic/mitochondrial release factor family. Post-translationally, methylated by PrmC. Methylation increases the termination efficiency of RF1.

It localises to the cytoplasm. Its function is as follows. Peptide chain release factor 1 directs the termination of translation in response to the peptide chain termination codons UAG and UAA. In Halorhodospira halophila (strain DSM 244 / SL1) (Ectothiorhodospira halophila (strain DSM 244 / SL1)), this protein is Peptide chain release factor 1.